A 711-amino-acid chain; its full sequence is Putative membrane protein IgaA homolog (711 aa).

Position 1 (methionine 1) is a topological domain, periplasmic. A helical transmembrane segment spans residues 2–22; sequence STIVIFLAALLACSLLAGWLI. The Cytoplasmic portion of the chain corresponds to 23–204; it reads KVRSRRRQLP…YALSRPRGLR (182 aa). 2 helical membrane-spanning segments follow: residues 205-225 and 226-246; these read EALL…TPDV and FVPW…WGLF. At 247 to 339 the chain is on the cytoplasmic side; the sequence is APPAKSSLRE…KNFPLQHWLR (93 aa). Residues 340–360 traverse the membrane as a helical segment; it reads STIIAAGSLLVLFMLLFWIPL. Residues 361–655 are Periplasmic-facing; it reads DMPLKFTLSW…IPDRSGLWRY (295 aa). Residues 656-676 form a helical membrane-spanning segment; it reads LSTTLLLLTMLGSAIYNGVQA. Residues 677-711 are Cytoplasmic-facing; it reads WRRYQRHRTRMMKIQAYYESCLNPQLITPSESLIE.

The protein belongs to the IgaA family.

It is found in the cell inner membrane. The protein is Putative membrane protein IgaA homolog (yrfF) of Escherichia coli O157:H7.